A 277-amino-acid chain; its full sequence is Phosphate import ATP-binding protein PstB (277 aa).

The 242-residue stretch at 31 to 272 folds into the ABC transporter domain; it reads IEVPGLSLFY…PAKKQTEDYI (242 aa). Residue 63 to 70 participates in ATP binding; the sequence is GPSGCGKS.

It belongs to the ABC transporter superfamily. Phosphate importer (TC 3.A.1.7) family. The complex is composed of two ATP-binding proteins (PstB), two transmembrane proteins (PstC and PstA) and a solute-binding protein (PstS).

Its subcellular location is the cell inner membrane. It catalyses the reaction phosphate(out) + ATP + H2O = ADP + 2 phosphate(in) + H(+). Part of the ABC transporter complex PstSACB involved in phosphate import. Responsible for energy coupling to the transport system. The chain is Phosphate import ATP-binding protein PstB from Pseudomonas putida (Arthrobacter siderocapsulatus).